The primary structure comprises 998 residues: DNA damage-induced apoptosis suppressor protein (998 aa).

The interval 815–834 (DKQQASPSCPKNIKTPSQKI) is disordered. A compositionally biased stretch (polar residues) spans 817 to 834 (QQASPSCPKNIKTPSQKI).

In terms of tissue distribution, highly expressed in colorectal and lung cancer tissues.

It is found in the cytoplasm. Its subcellular location is the nucleus. Functionally, may be an anti-apoptotic protein involved in DNA repair or cell survival. This is DNA damage-induced apoptosis suppressor protein (DDIAS) from Homo sapiens (Human).